The chain runs to 190 residues: ADP-ribosylation factor-like protein 6 (190 aa).

A lipid anchor (N-myristoyl glycine) is attached at glycine 2. Residues 24 to 31, 69 to 73, and 130 to 133 each bind GTP; these read GLDNSGKT, DMAGQ, and NKMD.

It belongs to the small GTPase superfamily. Arf family. As to expression, specifically expressed in ciliated cells.

The protein resides in the cytoplasm. In Caenorhabditis elegans, this protein is ADP-ribosylation factor-like protein 6.